The primary structure comprises 208 residues: Potassium-transporting ATPase KdpC subunit (208 aa).

Residues 6–26 form a helical membrane-spanning segment; that stretch reads PALLVSIVLLVVCGLVYPLVL.

The protein belongs to the KdpC family. As to quaternary structure, the system is composed of three essential subunits: KdpA, KdpB and KdpC.

The protein localises to the cell membrane. Functionally, part of the high-affinity ATP-driven potassium transport (or Kdp) system, which catalyzes the hydrolysis of ATP coupled with the electrogenic transport of potassium into the cytoplasm. This subunit acts as a catalytic chaperone that increases the ATP-binding affinity of the ATP-hydrolyzing subunit KdpB by the formation of a transient KdpB/KdpC/ATP ternary complex. This is Potassium-transporting ATPase KdpC subunit from Clostridioides difficile (strain 630) (Peptoclostridium difficile).